The following is a 363-amino-acid chain: Chorismate synthase (363 aa).

Positions 48 and 54 each coordinate NADP(+). FMN-binding positions include 131-133 (RSS), 244-245 (NA), Gly-288, 303-307 (KPTSS), and Arg-329.

This sequence belongs to the chorismate synthase family. In terms of assembly, homotetramer. FMNH2 serves as cofactor.

The catalysed reaction is 5-O-(1-carboxyvinyl)-3-phosphoshikimate = chorismate + phosphate. The protein operates within metabolic intermediate biosynthesis; chorismate biosynthesis; chorismate from D-erythrose 4-phosphate and phosphoenolpyruvate: step 7/7. Catalyzes the anti-1,4-elimination of the C-3 phosphate and the C-6 proR hydrogen from 5-enolpyruvylshikimate-3-phosphate (EPSP) to yield chorismate, which is the branch point compound that serves as the starting substrate for the three terminal pathways of aromatic amino acid biosynthesis. This reaction introduces a second double bond into the aromatic ring system. This chain is Chorismate synthase, found in Hyphomonas neptunium (strain ATCC 15444).